Reading from the N-terminus, the 229-residue chain is Probable queuosine precursor transporter (229 aa).

7 helical membrane-spanning segments follow: residues 6 to 26 (FWIF…KGFG), 28 to 48 (MGLF…VVKT), 49 to 69 (VELF…IFFA), 86 to 106 (VWLG…VLLF), 118 to 138 (LETI…AFIF), 160 to 182 (LWLR…FTAV), and 192 to 214 (VWLH…SLPY).

It belongs to the vitamin uptake transporter (VUT/ECF) (TC 2.A.88) family. Q precursor transporter subfamily.

The protein localises to the cell membrane. Involved in the import of queuosine (Q) precursors, required for Q precursor salvage. In Bacillus subtilis (strain 168), this protein is Probable queuosine precursor transporter (ypdP).